Consider the following 303-residue polypeptide: tRNA dimethylallyltransferase (303 aa).

16 to 23 (GPTASGKS) contributes to the ATP binding site. 18-23 (TASGKS) lines the substrate pocket. Positions 41–44 (DSMQ) are interaction with substrate tRNA. Residues 141–161 (AEALHGELSARDPETAGRVRP) are disordered. The segment at 165 to 169 (QRIVR) is interaction with substrate tRNA.

It belongs to the IPP transferase family. Monomer. Requires Mg(2+) as cofactor.

The enzyme catalyses adenosine(37) in tRNA + dimethylallyl diphosphate = N(6)-dimethylallyladenosine(37) in tRNA + diphosphate. Catalyzes the transfer of a dimethylallyl group onto the adenine at position 37 in tRNAs that read codons beginning with uridine, leading to the formation of N6-(dimethylallyl)adenosine (i(6)A). The chain is tRNA dimethylallyltransferase from Rhizobium meliloti (strain 1021) (Ensifer meliloti).